The sequence spans 165 residues: NADPH-dependent 7-cyano-7-deazaguanine reductase (165 aa).

Catalysis depends on cysteine 56, which acts as the Thioimide intermediate. Aspartate 63 functions as the Proton donor in the catalytic mechanism. Substrate is bound by residues 78–80 (VES) and 97–98 (HE).

It belongs to the GTP cyclohydrolase I family. QueF type 1 subfamily.

It localises to the cytoplasm. It catalyses the reaction 7-aminomethyl-7-carbaguanine + 2 NADP(+) = 7-cyano-7-deazaguanine + 2 NADPH + 3 H(+). Its pathway is tRNA modification; tRNA-queuosine biosynthesis. Functionally, catalyzes the NADPH-dependent reduction of 7-cyano-7-deazaguanine (preQ0) to 7-aminomethyl-7-deazaguanine (preQ1). This Bacillus cytotoxicus (strain DSM 22905 / CIP 110041 / 391-98 / NVH 391-98) protein is NADPH-dependent 7-cyano-7-deazaguanine reductase.